Consider the following 180-residue polypeptide: Large ribosomal subunit protein uL5 (180 aa).

This sequence belongs to the universal ribosomal protein uL5 family. As to quaternary structure, part of the 50S ribosomal subunit; part of the 5S rRNA/L5/L18/L25 subcomplex. Contacts the 5S rRNA and the P site tRNA. Forms a bridge to the 30S subunit in the 70S ribosome.

Its function is as follows. This is one of the proteins that bind and probably mediate the attachment of the 5S RNA into the large ribosomal subunit, where it forms part of the central protuberance. In the 70S ribosome it contacts protein S13 of the 30S subunit (bridge B1b), connecting the 2 subunits; this bridge is implicated in subunit movement. Contacts the P site tRNA; the 5S rRNA and some of its associated proteins might help stabilize positioning of ribosome-bound tRNAs. The protein is Large ribosomal subunit protein uL5 of Lactobacillus johnsonii (strain CNCM I-12250 / La1 / NCC 533).